The chain runs to 265 residues: NAD kinase 1 (265 aa).

Asp45 acts as the Proton acceptor in catalysis. Residues 45–46 (DG), His50, 122–123 (NE), Arg148, Asp150, and Ala185 contribute to the NAD(+) site.

It belongs to the NAD kinase family. A divalent metal cation is required as a cofactor.

It localises to the cytoplasm. It carries out the reaction NAD(+) + ATP = ADP + NADP(+) + H(+). Involved in the regulation of the intracellular balance of NAD and NADP, and is a key enzyme in the biosynthesis of NADP. Catalyzes specifically the phosphorylation on 2'-hydroxyl of the adenosine moiety of NAD to yield NADP. This chain is NAD kinase 1, found in Halalkalibacterium halodurans (strain ATCC BAA-125 / DSM 18197 / FERM 7344 / JCM 9153 / C-125) (Bacillus halodurans).